The chain runs to 166 residues: Ribosome maturation factor RimP (166 aa).

The protein belongs to the RimP family.

It localises to the cytoplasm. Functionally, required for maturation of 30S ribosomal subunits. This chain is Ribosome maturation factor RimP, found in Rickettsia akari (strain Hartford).